Consider the following 428-residue polypeptide: GTPase Obg (428 aa).

An Obg domain is found at 1 to 158 (MFIDEVIITV…IKVKLELKLL (158 aa)). One can recognise an OBG-type G domain in the interval 159-330 (ADVALVGYPS…ILYKTYDMLS (172 aa)). GTP is bound by residues 165–172 (GYPSVGKS), 190–194 (FTTLE), 212–215 (DIPG), 282–285 (NKMD), and 311–313 (SVL). Residues serine 172 and threonine 192 each contribute to the Mg(2+) site. Residues 349-428 (ELKIEKEDFE…IADVEFEYFE (80 aa)) form the OCT domain.

This sequence belongs to the TRAFAC class OBG-HflX-like GTPase superfamily. OBG GTPase family. Monomer. The cofactor is Mg(2+).

It is found in the cytoplasm. In terms of biological role, an essential GTPase which binds GTP, GDP and possibly (p)ppGpp with moderate affinity, with high nucleotide exchange rates and a fairly low GTP hydrolysis rate. Plays a role in control of the cell cycle, stress response, ribosome biogenesis and in those bacteria that undergo differentiation, in morphogenesis control. The sequence is that of GTPase Obg from Fusobacterium nucleatum subsp. nucleatum (strain ATCC 25586 / DSM 15643 / BCRC 10681 / CIP 101130 / JCM 8532 / KCTC 2640 / LMG 13131 / VPI 4355).